We begin with the raw amino-acid sequence, 229 residues long: Secreted RxLR effector protein PITG_22926 (229 aa).

The signal sequence occupies residues 1–23 (MRCNHTLCVVAITFLVSWSQTLS). The RxLR-dEER motif lies at 34-45 (PLVRSVSATEER).

This sequence belongs to the RxLR effector family.

Its subcellular location is the secreted. It localises to the host nucleus. Its function is as follows. Secreted effector that acts as a RNA silencing suppressor, probably by inhibiting the biogenesis of small RNAs in the host plant, to manipulate host immune responses and promote Phytophthora infection. This Phytophthora infestans (strain T30-4) (Potato late blight agent) protein is Secreted RxLR effector protein PITG_22926.